The following is a 313-amino-acid chain: Ribosomal RNA small subunit methyltransferase H (313 aa).

S-adenosyl-L-methionine-binding positions include 51–53 (GGH), aspartate 71, phenylalanine 98, aspartate 119, and glutamine 126. Residues 293-313 (EEQRANPRSRSARLRVAERVS) are disordered.

It belongs to the methyltransferase superfamily. RsmH family.

The protein resides in the cytoplasm. It carries out the reaction cytidine(1402) in 16S rRNA + S-adenosyl-L-methionine = N(4)-methylcytidine(1402) in 16S rRNA + S-adenosyl-L-homocysteine + H(+). Functionally, specifically methylates the N4 position of cytidine in position 1402 (C1402) of 16S rRNA. This is Ribosomal RNA small subunit methyltransferase H from Roseiflexus sp. (strain RS-1).